A 249-amino-acid chain; its full sequence is Segregation and condensation protein A (249 aa).

This sequence belongs to the ScpA family. Component of a cohesin-like complex composed of ScpA, ScpB and the Smc homodimer, in which ScpA and ScpB bind to the head domain of Smc. The presence of the three proteins is required for the association of the complex with DNA.

It localises to the cytoplasm. Its function is as follows. Participates in chromosomal partition during cell division. May act via the formation of a condensin-like complex containing Smc and ScpB that pull DNA away from mid-cell into both cell halves. The protein is Segregation and condensation protein A of Listeria welshimeri serovar 6b (strain ATCC 35897 / DSM 20650 / CCUG 15529 / CIP 8149 / NCTC 11857 / SLCC 5334 / V8).